Here is a 366-residue protein sequence, read N- to C-terminus: Prostaglandin F2-alpha receptor (366 aa).

Topologically, residues 1–31 (MSMNSSKQPVSPAAGLIANTTCQTENRLSVF) are extracellular. N-linked (GlcNAc...) asparagine glycosylation is found at Asn-4 and Asn-19. The chain crosses the membrane as a helical span at residues 32 to 55 (FSIIFMTVGILSNSLAIAILMKAY). Residues 56–69 (QRFRQKSKASFLLL) are Cytoplasmic-facing. The chain crosses the membrane as a helical span at residues 70–90 (ASGLVITDFFGHLINGGIAVF). The Extracellular segment spans residues 91–109 (VYASDKDWIRFDQSNILCS). A disulfide bridge links Cys-108 with Cys-186. The chain crosses the membrane as a helical span at residues 110-131 (IFGISMVFSGLCPLFLGSAMAI). Residues 132–152 (ERCIGVTNPIFHSTKITSKHV) lie on the Cytoplasmic side of the membrane. Residues 153–175 (KMILSGVCMFAVFVAVLPILGHR) form a helical membrane-spanning segment. The Extracellular segment spans residues 176-198 (DYQIQASRTWCFYNTEHIEDWED). A helical transmembrane segment spans residues 199 to 224 (RFYLLFFSFLGLLALGVSFSCNAVTG). At 225–250 (VTLLRVKFRSQQHRQGRSHHLEMIIQ) the chain is on the cytoplasmic side. A helical membrane pass occupies residues 251-267 (LLAIMCVSCVCWSPFLV). Residues 268–285 (TMANIAINGNNSPVTCET) are Extracellular-facing. A helical membrane pass occupies residues 286-307 (TLFALRMATWNQILDPWVYILL). The Cytoplasmic segment spans residues 308–366 (RKAVLRNLYKLASRCCGVNIISLHIWELSSIKNSLKVAAISESPAAEKESQQASSEAGL).

The protein belongs to the G-protein coupled receptor 1 family.

Its subcellular location is the cell membrane. Functionally, receptor for prostaglandin F2-alpha (PGF2-alpha). The activity of this receptor is mediated by G proteins which activate a phosphatidylinositol-calcium second messenger system. Initiates luteolysis in the corpus luteum. The polypeptide is Prostaglandin F2-alpha receptor (Ptgfr) (Mus musculus (Mouse)).